The sequence spans 492 residues: Mitochondrial distribution and morphology protein 12 (492 aa).

Positions 1 to 492 (MSIDLNWETV…VYPSFWTFLV (492 aa)) constitute an SMP-LTD domain. 3 disordered regions span residues 68–158 (DFYE…STPG), 199–301 (LEGH…GHPR), and 379–434 (AVGG…GSGN). Over residues 78–90 (VASDDSEGEEDAV) the composition is skewed to acidic residues. Over residues 130-139 (SPGGPGGPGM) the composition is skewed to gly residues. Low complexity predominate over residues 246-257 (LNPNSLAPPSSS). Residues 270–285 (TTPAPGSATALSGSNE) are compositionally biased toward polar residues. The segment covering 387–400 (GLSSPGEGPSQAQG) has biased composition (low complexity). The segment covering 401–415 (QGQGQGQGQGQGQTP) has biased composition (gly residues). Over residues 416-428 (GAGQQKQQKKQAG) the composition is skewed to low complexity.

Belongs to the MDM12 family. In terms of assembly, component of the ER-mitochondria encounter structure (ERMES) or MDM complex, composed of MMM1, MDM10, MDM12 and MDM34. An MMM1 homodimer associates with one molecule of MDM12 on each side in a pairwise head-to-tail manner, and the SMP-LTD domains of MMM1 and MDM12 generate a continuous hydrophobic tunnel for phospholipid trafficking.

The protein resides in the mitochondrion outer membrane. It is found in the endoplasmic reticulum membrane. Component of the ERMES/MDM complex, which serves as a molecular tether to connect the endoplasmic reticulum (ER) and mitochondria. Components of this complex are involved in the control of mitochondrial shape and protein biogenesis, and function in nonvesicular lipid trafficking between the ER and mitochondria. MDM12 is required for the interaction of the ER-resident membrane protein MMM1 and the outer mitochondrial membrane-resident beta-barrel protein MDM10. The MDM12-MMM1 subcomplex functions in the major beta-barrel assembly pathway that is responsible for biogenesis of all mitochondrial outer membrane beta-barrel proteins, and acts in a late step after the SAM complex. The MDM10-MDM12-MMM1 subcomplex further acts in the TOM40-specific pathway after the action of the MDM12-MMM1 complex. Essential for establishing and maintaining the structure of mitochondria and maintenance of mtDNA nucleoids. The chain is Mitochondrial distribution and morphology protein 12 from Chaetomium globosum (strain ATCC 6205 / CBS 148.51 / DSM 1962 / NBRC 6347 / NRRL 1970) (Soil fungus).